Here is a 577-residue protein sequence, read N- to C-terminus: MFS-type transporter CPUR_05422 (577 aa).

Residues 1-49 form a disordered region; that stretch reads MSAMSAMGKPEHGSATTSDLEHRATESSLEKQDVEAAPPGPVKPVDPSP. The span at 19 to 34 shows a compositional bias: basic and acidic residues; it reads DLEHRATESSLEKQDV. Residues 38 to 47 show a composition bias toward pro residues; that stretch reads PPGPVKPVDP. The next 14 helical transmembrane spans lie at 52–72, 93–113, 123–143, 157–177, 184–204, 212–232, 249–269, 285–305, 326–346, 359–379, 383–403, 416–436, 449–469, and 525–545; these read STLK…LVAV, DVGW…LLFG, VVLL…GAAP, VGSA…IPLA, GLMG…GGAF, WCFY…FFYF, ILSL…CLLL, IIVL…VQIC, FLTT…IPIW, GIQL…GGLL, IGYY…GAGL, VIGY…TPNL, MGIA…VAVG, and VFIV…CMEW. The tract at residues 554–577 is disordered; sequence PPAGPPAGAPTESAPVETKAAGHT.

The protein belongs to the major facilitator superfamily. TCR/Tet family.

It is found in the membrane. MFS-type transporter; part of the ergochrome gene cluster responsible for the typical purple-black color of the ergot sclerotia. The ergochrome gene cluster produces several ergot pigments including the yellow ergochrome secalonic acid and its derivatives, as well as the red anthraquinones endocrocin and clavorubin. The polypeptide is MFS-type transporter CPUR_05422 (Claviceps purpurea (strain 20.1) (Ergot fungus)).